The chain runs to 596 residues: Chaperone protein DnaK (596 aa).

At T180 the chain carries Phosphothreonine; by autocatalysis.

This sequence belongs to the heat shock protein 70 family.

Functionally, acts as a chaperone. This is Chaperone protein DnaK from Thermotoga neapolitana (strain ATCC 49049 / DSM 4359 / NBRC 107923 / NS-E).